Consider the following 305-residue polypeptide: Ribonucleoside-diphosphate reductase small subunit (305 aa).

Fe cation-binding residues include Glu64, Glu94, and His97. Tyr101 is a catalytic residue. A helical membrane pass occupies residues 150–170 (ILMFLIVEGIYFISSFYSISL). 3 residues coordinate Fe cation: Glu157, Glu191, and His194.

Belongs to the ribonucleoside diphosphate reductase small chain family. Heterotetramer composed of a homodimer of the large subunit (R1) and a homodimer of the small subunit (R2). Larger multisubunit protein complex are also active, composed of (R1)n(R2)n. Fe cation is required as a cofactor.

The protein resides in the host membrane. The catalysed reaction is a 2'-deoxyribonucleoside 5'-diphosphate + [thioredoxin]-disulfide + H2O = a ribonucleoside 5'-diphosphate + [thioredoxin]-dithiol. In terms of biological role, ribonucleoside-diphosphate reductase holoenzyme provides the precursors necessary for viral DNA synthesis. Allows virus growth in non-dividing cells, as well as reactivation from latency in infected hosts. Catalyzes the biosynthesis of deoxyribonucleotides from the corresponding ribonucleotides. This chain is Ribonucleoside-diphosphate reductase small subunit, found in Homo sapiens (Human).